A 126-amino-acid chain; its full sequence is DNA-directed RNA polymerase subunit omega (126 aa).

The protein belongs to the RNA polymerase subunit omega family. In terms of assembly, the RNAP catalytic core consists of 2 alpha, 1 beta, 1 beta' and 1 omega subunit. When a sigma factor is associated with the core the holoenzyme is formed, which can initiate transcription.

The catalysed reaction is RNA(n) + a ribonucleoside 5'-triphosphate = RNA(n+1) + diphosphate. In terms of biological role, promotes RNA polymerase assembly. Latches the N- and C-terminal regions of the beta' subunit thereby facilitating its interaction with the beta and alpha subunits. The sequence is that of DNA-directed RNA polymerase subunit omega from Rickettsia felis (strain ATCC VR-1525 / URRWXCal2) (Rickettsia azadi).